We begin with the raw amino-acid sequence, 418 residues long: Serine hydroxymethyltransferase (418 aa).

(6S)-5,6,7,8-tetrahydrofolate contacts are provided by residues leucine 121 and 125–127 (GHL). N6-(pyridoxal phosphate)lysine is present on lysine 230. (6S)-5,6,7,8-tetrahydrofolate-binding positions include glutamate 246 and 355-357 (SPF).

Belongs to the SHMT family. In terms of assembly, homodimer. Requires pyridoxal 5'-phosphate as cofactor.

It localises to the cytoplasm. The enzyme catalyses (6R)-5,10-methylene-5,6,7,8-tetrahydrofolate + glycine + H2O = (6S)-5,6,7,8-tetrahydrofolate + L-serine. The protein operates within one-carbon metabolism; tetrahydrofolate interconversion. It functions in the pathway amino-acid biosynthesis; glycine biosynthesis; glycine from L-serine: step 1/1. Its function is as follows. Catalyzes the reversible interconversion of serine and glycine with tetrahydrofolate (THF) serving as the one-carbon carrier. This reaction serves as the major source of one-carbon groups required for the biosynthesis of purines, thymidylate, methionine, and other important biomolecules. Also exhibits THF-independent aldolase activity toward beta-hydroxyamino acids, producing glycine and aldehydes, via a retro-aldol mechanism. The protein is Serine hydroxymethyltransferase of Streptococcus pneumoniae (strain ATCC 700669 / Spain 23F-1).